An 840-amino-acid polypeptide reads, in one-letter code: Phosphatidylinositol-glycan-specific phospholipase D (840 aa).

An N-terminal signal peptide occupies residues 1–23 (MSAFRLWPGLLIMLGSLCHRGSP). 5 N-linked (GlcNAc...) asparagine glycosylation sites follow: asparagine 94, asparagine 271, asparagine 292, asparagine 307, and asparagine 321. FG-GAP repeat units follow at residues 367–428 (SPLA…GLPP), 436–497 (EAHR…GGMS), 499–559 (SPNI…LSDK), 563–623 (NVEA…SLGR), 633–693 (QSWF…GATR), 704–770 (LLLS…TLGD), and 788–840 (QYVL…LGSD). 5 N-linked (GlcNAc...) asparagine glycosylation sites follow: asparagine 501, asparagine 568, asparagine 591, asparagine 604, and asparagine 659.

It belongs to the GPLD1 family. Monomer.

Its subcellular location is the secreted. The enzyme catalyses a 6-(alpha-D-glucosaminyl)-1-(1,2-diacyl-sn-glycero-3-phospho)-1D-myo-inositol + H2O = 6-(alpha-D-glucosaminyl)-1D-myo-inositol + a 1,2-diacyl-sn-glycero-3-phosphate + H(+). Its function is as follows. This protein hydrolyzes the inositol phosphate linkage in proteins anchored by phosphatidylinositol glycans (GPI-anchor) thus releasing these proteins from the membrane. The chain is Phosphatidylinositol-glycan-specific phospholipase D (GPLD1) from Homo sapiens (Human).